Here is a 936-residue protein sequence, read N- to C-terminus: Protein translocase subunit SecA (936 aa).

ATP contacts are provided by residues Gln-90, 108–112 (GEGKT), and Asp-499.

It belongs to the SecA family. In terms of assembly, monomer and homodimer. Part of the essential Sec protein translocation apparatus which comprises SecA, SecYEG and auxiliary proteins SecDF. Other proteins may also be involved.

It is found in the cell inner membrane. The protein localises to the cellular thylakoid membrane. The protein resides in the cytoplasm. The catalysed reaction is ATP + H2O + cellular proteinSide 1 = ADP + phosphate + cellular proteinSide 2.. Part of the Sec protein translocase complex. Interacts with the SecYEG preprotein conducting channel. Has a central role in coupling the hydrolysis of ATP to the transfer of proteins into and across the cell membrane, serving as an ATP-driven molecular motor driving the stepwise translocation of polypeptide chains across the membrane. In terms of biological role, probably participates in protein translocation into and across both the cytoplasmic and thylakoid membranes in cyanobacterial cells. The protein is Protein translocase subunit SecA of Trichodesmium erythraeum (strain IMS101).